A 515-amino-acid chain; its full sequence is Bifunctional purine biosynthesis protein PurH (515 aa).

The MGS-like domain occupies 1-145 (MTKRVLISVS…KNHASVTVVV (145 aa)).

This sequence belongs to the PurH family.

It catalyses the reaction (6R)-10-formyltetrahydrofolate + 5-amino-1-(5-phospho-beta-D-ribosyl)imidazole-4-carboxamide = 5-formamido-1-(5-phospho-D-ribosyl)imidazole-4-carboxamide + (6S)-5,6,7,8-tetrahydrofolate. The enzyme catalyses IMP + H2O = 5-formamido-1-(5-phospho-D-ribosyl)imidazole-4-carboxamide. It participates in purine metabolism; IMP biosynthesis via de novo pathway; 5-formamido-1-(5-phospho-D-ribosyl)imidazole-4-carboxamide from 5-amino-1-(5-phospho-D-ribosyl)imidazole-4-carboxamide (10-formyl THF route): step 1/1. Its pathway is purine metabolism; IMP biosynthesis via de novo pathway; IMP from 5-formamido-1-(5-phospho-D-ribosyl)imidazole-4-carboxamide: step 1/1. The chain is Bifunctional purine biosynthesis protein PurH from Streptococcus pneumoniae serotype 19F (strain G54).